The following is a 106-amino-acid chain: Cell division protein FtsB (106 aa).

At 1 to 3 the chain is on the cytoplasmic side; sequence MRL. The helical transmembrane segment at 4-21 threads the bilayer; that stretch reads LTLIFVALIALLQYPLWL. Topologically, residues 22 to 106 are periplasmic; that stretch reads GKGSWLRVWD…SPPAALTGAQ (85 aa). The stretch at 31 to 73 forms a coiled coil; sequence DLNQKIVAQKAVNAELKLRNDTLDAEVRDLKQGNAAIEERARS.

Belongs to the FtsB family. As to quaternary structure, part of a complex composed of FtsB, FtsL and FtsQ.

It is found in the cell inner membrane. Functionally, essential cell division protein. May link together the upstream cell division proteins, which are predominantly cytoplasmic, with the downstream cell division proteins, which are predominantly periplasmic. The protein is Cell division protein FtsB of Methylobacillus flagellatus (strain ATCC 51484 / DSM 6875 / VKM B-1610 / KT).